The following is a 443-amino-acid chain: Xaa-Pro dipeptidase (443 aa).

Positions 246, 257, 339, 384, and 423 each coordinate Mn(2+).

Belongs to the peptidase M24B family. Bacterial-type prolidase subfamily. The cofactor is Mn(2+).

It catalyses the reaction Xaa-L-Pro dipeptide + H2O = an L-alpha-amino acid + L-proline. Splits dipeptides with a prolyl residue in the C-terminal position. The protein is Xaa-Pro dipeptidase of Erwinia tasmaniensis (strain DSM 17950 / CFBP 7177 / CIP 109463 / NCPPB 4357 / Et1/99).